The primary structure comprises 181 residues: Ribosome-recycling factor (181 aa).

The segment at 131–154 (RRDAMDSVKKEKEMPEDDVRKAEN) is disordered.

The protein belongs to the RRF family.

The protein resides in the cytoplasm. Its function is as follows. Responsible for the release of ribosomes from messenger RNA at the termination of protein biosynthesis. May increase the efficiency of translation by recycling ribosomes from one round of translation to another. This is Ribosome-recycling factor from Leuconostoc citreum (strain KM20).